Reading from the N-terminus, the 220-residue chain is Histone deacetylase complex subunit SAP30 (220 aa).

An interaction with NCOR1 region spans residues 1 to 129 (MNGFTPDEMS…QSVRNRRKRK (129 aa)). Threonine 5 is modified (phosphothreonine). The segment at 67–115 (CCLREDGERCGRAAGNASFSKRIQKSISQKKVKIELDKSARHLYICDYH) adopts an Atypical zinc-finger fold. Lysine 87 is covalently cross-linked (Glycyl lysine isopeptide (Lys-Gly) (interchain with G-Cter in SUMO2)). Residues 123–143 (RNRRKRKGSDDDGGDSPVQDI) are disordered. The interaction with SIN3A stretch occupies residues 130 to 220 (GSDDDGGDSP…SDLKVDSGVH (91 aa)). Phosphoserine occurs at positions 131 and 138. At threonine 145 the chain carries Phosphothreonine. Glycyl lysine isopeptide (Lys-Gly) (interchain with G-Cter in SUMO2) cross-links involve residues lysine 194, lysine 205, and lysine 214.

Belongs to the SAP30 family. As to quaternary structure, component of the histone deacetylase complex that includes at least SIN3A, HDAC1 and HDAC2. Found in a complex composed of at least SINHCAF, SIN3A, HDAC1, SAP30, RBBP4, OGT and TET1. Interacts with HDAC1. Interacts with SIN3A, SIN3B, HDAC2, RBBP4 and NCOR1. Interacts with SAMSN1. Interacts with HCFC1. Interacts with SAP30BP. Expressed in all tissues tested with highest levels in pancreas, ovary, PBL, spleen and thymus; lowest levels in brain, placenta, lung and kidney.

Its subcellular location is the nucleus. Involved in the functional recruitment of the Sin3-histone deacetylase complex (HDAC) to a specific subset of N-CoR corepressor complexes. Capable of transcription repression by N-CoR. Active in deacetylating core histone octamers (when in a complex) but inactive in deacetylating nucleosomal histones. In terms of biological role, (Microbial infection) Involved in transcriptional repression of HHV-1 genes TK and gC. This is Histone deacetylase complex subunit SAP30 from Homo sapiens (Human).